The primary structure comprises 651 residues: Threonine--tRNA ligase (651 aa).

A TGS domain is found at 1 to 64 (MSSVVHVTLP…EKDCTLQVLT (64 aa)). Residues 245–535 (DHRRLGPELG…LTEHYAGNFP (291 aa)) form a catalytic region. Residues C336, H387, and H512 each contribute to the Zn(2+) site.

Belongs to the class-II aminoacyl-tRNA synthetase family. Homodimer. It depends on Zn(2+) as a cofactor.

The protein localises to the cytoplasm. The catalysed reaction is tRNA(Thr) + L-threonine + ATP = L-threonyl-tRNA(Thr) + AMP + diphosphate + H(+). Catalyzes the attachment of threonine to tRNA(Thr) in a two-step reaction: L-threonine is first activated by ATP to form Thr-AMP and then transferred to the acceptor end of tRNA(Thr). Also edits incorrectly charged L-seryl-tRNA(Thr). The sequence is that of Threonine--tRNA ligase from Symbiobacterium thermophilum (strain DSM 24528 / JCM 14929 / IAM 14863 / T).